Consider the following 655-residue polypeptide: tRNA uridine 5-carboxymethylaminomethyl modification enzyme MnmG (655 aa).

13 to 18 serves as a coordination point for FAD; that stretch reads GGGHAG. 281 to 295 contacts NAD(+); that stretch reads GPRYCPSVEDKINRF.

Belongs to the MnmG family. As to quaternary structure, homodimer. Heterotetramer of two MnmE and two MnmG subunits. Requires FAD as cofactor.

The protein resides in the cytoplasm. NAD-binding protein involved in the addition of a carboxymethylaminomethyl (cmnm) group at the wobble position (U34) of certain tRNAs, forming tRNA-cmnm(5)s(2)U34. The polypeptide is tRNA uridine 5-carboxymethylaminomethyl modification enzyme MnmG (Paracidovorax citrulli (strain AAC00-1) (Acidovorax citrulli)).